The primary structure comprises 184 residues: Mitochondrial import inner membrane translocase subunit TIM22 (184 aa).

Residues 1-26 (MSLWGVYTGPQPPKKPLQEMTQEEQA) are disordered. 2 disulfide bridges follow: cysteine 40/cysteine 118 and cysteine 137/cysteine 156. Transmembrane regions (helical) follow at residues 45-65 (VMAG…MASM) and 151-171 (AALV…MYLN).

It belongs to the Tim17/Tim22/Tim23 family. In terms of assembly, component of the TIM22 complex, whose core is composed of TIM22 and TIM54, associated with the 70 kDa heterohexamer composed of TIM9 and TIM10 (or TIM8 and TIM13).

Its subcellular location is the mitochondrion inner membrane. Essential core component of the TIM22 complex, a complex that mediates the import and insertion of multi-pass transmembrane proteins into the mitochondrial inner membrane. In the TIM22 complex, it constitutes the voltage-activated and signal-gated channel. Forms a twin-pore translocase that uses the membrane potential as external driving force in 2 voltage-dependent steps. The sequence is that of Mitochondrial import inner membrane translocase subunit TIM22 from Candida albicans (strain SC5314 / ATCC MYA-2876) (Yeast).